The chain runs to 350 residues: Probable flap endonuclease 1 homolog (350 aa).

Residues 1–95 (MGITKLAHLI…AVLEKRAQST (95 aa)) form an N-domain region. A Mg(2+)-binding site is contributed by aspartate 34. Arginine 61 lines the DNA pocket. Mg(2+)-binding residues include aspartate 77, glutamate 130, glutamate 132, aspartate 151, and aspartate 153. The interval 110-223 (NQECLRLLHL…SRALKLIKEH (114 aa)) is I-domain. Position 130 (glutamate 130) interacts with DNA. DNA contacts are provided by glycine 201 and aspartate 203. Aspartate 203 contacts Mg(2+). The tract at residues 317 to 325 (RQSRLEDFF) is interaction with PCNA.

This sequence belongs to the XPG/RAD2 endonuclease family. FEN1 subfamily. As to quaternary structure, interacts with PCNA. Three molecules of fen1 bind to one PCNA trimer with each molecule binding to one PCNA monomer. PCNA stimulates the nuclease activity without altering cleavage specificity. Requires Mg(2+) as cofactor. Post-translationally, phosphorylated. Phosphorylation upon DNA damage induces relocalization to the nuclear plasma.

The protein resides in the nucleus. Its subcellular location is the nucleolus. The protein localises to the nucleoplasm. It localises to the mitochondrion. Its function is as follows. Structure-specific nuclease with 5'-flap endonuclease and 5'-3' exonuclease activities involved in DNA replication and repair. During DNA replication, cleaves the 5'-overhanging flap structure that is generated by displacement synthesis when DNA polymerase encounters the 5'-end of a downstream Okazaki fragment. It enters the flap from the 5'-end and then tracks to cleave the flap base, leaving a nick for ligation. Also involved in the long patch base excision repair (LP-BER) pathway, by cleaving within the apurinic/apyrimidinic (AP) site-terminated flap. Acts as a genome stabilization factor that prevents flaps from equilibrating into structures that lead to duplications and deletions. Also possesses 5'-3' exonuclease activity on nicked or gapped double-stranded DNA, and exhibits RNase H activity. Also involved in replication and repair of rDNA and in repairing mitochondrial DNA. This is Probable flap endonuclease 1 homolog from Danio rerio (Zebrafish).